Consider the following 428-residue polypeptide: Pregnancy-specific beta-1-glycoprotein 3 (428 aa).

Positions 1-34 (MGPLSAPPCTQRITWKGLLLTALLLNFWNLPTTA) are cleaved as a signal peptide. One can recognise an Ig-like V-type domain in the interval 35-144 (QVTIEAEPTK…TGHFTFTLYL (110 aa)). 2 N-linked (GlcNAc...) asparagine glycosylation sites follow: Asn-104 and Asn-111. A Cell attachment site motif is present at residues 127–129 (RGD). 3 consecutive Ig-like C2-type domains span residues 147 to 234 (PKPS…VTLN), 240 to 327 (PKPY…VTLN), and 335 to 410 (PRIY…KSMT). Disulfide bonds link Cys-169–Cys-217, Cys-262–Cys-310, and Cys-354–Cys-394. Residues Asn-268 and Asn-303 are each glycosylated (N-linked (GlcNAc...) asparagine).

This sequence belongs to the immunoglobulin superfamily. CEA family.

It localises to the secreted. In Homo sapiens (Human), this protein is Pregnancy-specific beta-1-glycoprotein 3 (PSG3).